The following is a 365-amino-acid chain: Transcription factor MYB93 (365 aa).

2 HTH myb-type domains span residues 9–61 (ENGL…TNYL) and 62–116 (RPDI…KKKL). DNA-binding regions (H-T-H motif) lie at residues 37-61 (WRAL…TNYL) and 89-112 (WSAI…NTHL).

In terms of assembly, interacts with FBX5.

The protein resides in the nucleus. The protein localises to the cytoplasm. Its function is as follows. Transcription factor that acts as a negative regulator of lateral root (LR) development. Required for normal auxin responses during LR development. May be part of a negative feedback loop stimulated specifically in the endodermis upon LR initiation to ensure that LRs are formed only in the correct place. The protein is Transcription factor MYB93 of Arabidopsis thaliana (Mouse-ear cress).